Reading from the N-terminus, the 200-residue chain is Guanylate kinase (200 aa).

The Guanylate kinase-like domain maps to 6–184; sequence GLLIVLSGPS…AVDKLKSILL (179 aa). 13-20 lines the ATP pocket; that stretch reads GPSGAGKG.

The protein belongs to the guanylate kinase family.

It localises to the cytoplasm. The catalysed reaction is GMP + ATP = GDP + ADP. Its function is as follows. Essential for recycling GMP and indirectly, cGMP. The sequence is that of Guanylate kinase from Desulfitobacterium hafniense (strain Y51).